We begin with the raw amino-acid sequence, 720 residues long: MITANSFERTIGGRKLVIESGKLARLADAAITIRYADTELLVTLCSAKKPREGVDFLPLTIDYEERMYAAGKIPGGFIRREGRPSEQAILAGRLTDRPLRPLLPKEWRNDLQIIITVIASDKENDADIWGVVGASTVLAMSEIPYEGPVGASRIGYINGEFVLNPTFAQLESSQLDLVVVSTRKAVVMIEAGSKEIPEDIMINAIEFAHKANQELIDLQDEIRAKLGKEKLPVPVLEIPEEVKTAVAAFVKGRVNEALSHQDKTARENAVEGLQAELVAALSETFAEGDILAAYDKEIKKAIRSTILEKDIRVNGRGIKQLRQLDAETGLLPRVHGSALFTRGDTQVMAITTLGSLQESQQLDGLSAEDTKRFMLHYNFAPFSTGEVKRSGSPGRREIGHGALAERALVPVLPTPEEFPYTIRLVADVVGSSGSTSMGSVCSSSLSLMDAGVPVKKAVAGISIGLITGENDTYCTITDIEGIEDNYGDMDFKVAGTRDGITAIQVDMKVKGISFDIIRDAIYQAKEARYNILDVMDKALAQPKTELSPYAPRMYKINIDPSKIGSVIGSGGKTIRSIIEQTNTTVDIENDGTVVIGATDEASAKKAIKIIEDLTKDIEAGSIYTGKVTRIMTFGAFVEILPGKEGMVHISELADHRVEKVEDIVKVGDDITVKVIEIDNQGRVNLSHRVILNPNAVPISRNRDSQPRRPGPFRPSDRSNS.

Mg(2+) contacts are provided by Asp484 and Asp490. The 60-residue stretch at 551-610 folds into the KH domain; that stretch reads PRMYKINIDPSKIGSVIGSGGKTIRSIIEQTNTTVDIENDGTVVIGATDEASAKKAIKII. Residues 620-688 enclose the S1 motif domain; that stretch reads GSIYTGKVTR…NQGRVNLSHR (69 aa). The disordered stretch occupies residues 697–720; that stretch reads PISRNRDSQPRRPGPFRPSDRSNS.

This sequence belongs to the polyribonucleotide nucleotidyltransferase family. Mg(2+) is required as a cofactor.

Its subcellular location is the cytoplasm. The catalysed reaction is RNA(n+1) + phosphate = RNA(n) + a ribonucleoside 5'-diphosphate. Functionally, involved in mRNA degradation. Catalyzes the phosphorolysis of single-stranded polyribonucleotides processively in the 3'- to 5'-direction. This is Polyribonucleotide nucleotidyltransferase from Dehalococcoides mccartyi (strain CBDB1).